The chain runs to 91 residues: Small ribosomal subunit protein bS20 (91 aa).

The interval Met-1–Thr-26 is disordered.

Belongs to the bacterial ribosomal protein bS20 family.

Binds directly to 16S ribosomal RNA. This Leptospira biflexa serovar Patoc (strain Patoc 1 / Ames) protein is Small ribosomal subunit protein bS20.